The chain runs to 95 residues: Co-chaperonin GroES (95 aa).

The disordered stretch occupies residues 36–55 (QEGEVVAVGSGKTLDDGSKV).

This sequence belongs to the GroES chaperonin family. In terms of assembly, heptamer of 7 subunits arranged in a ring. Interacts with the chaperonin GroEL.

It is found in the cytoplasm. Functionally, together with the chaperonin GroEL, plays an essential role in assisting protein folding. The GroEL-GroES system forms a nano-cage that allows encapsulation of the non-native substrate proteins and provides a physical environment optimized to promote and accelerate protein folding. GroES binds to the apical surface of the GroEL ring, thereby capping the opening of the GroEL channel. In Natranaerobius thermophilus (strain ATCC BAA-1301 / DSM 18059 / JW/NM-WN-LF), this protein is Co-chaperonin GroES.